The following is a 103-amino-acid chain: ATP synthase F(0) complex subunit g, mitochondrial (103 aa).

N-acetylalanine is present on alanine 2. An N6-acetyllysine mark is found at lysine 11, lysine 24, lysine 35, and lysine 54.

Component of the ATP synthase complex composed at least of ATP5F1A/subunit alpha, ATP5F1B/subunit beta, ATP5MC1/subunit c (homooctomer), MT-ATP6/subunit a, MT-ATP8/subunit 8, ATP5ME/subunit e, ATP5MF/subunit f, ATP5MG/subunit g, ATP5MK/subunit k, ATP5MJ/subunit j, ATP5F1C/subunit gamma, ATP5F1D/subunit delta, ATP5F1E/subunit epsilon, ATP5PF/subunit F6, ATP5PB/subunit b, ATP5PD/subunit d, ATP5PO/subunit OSCP. ATP synthase complex consists of a soluble F(1) head domain (subunits alpha(3) and beta(3)) - the catalytic core - and a membrane F(0) domain - the membrane proton channel (subunits c, a, 8, e, f, g, k and j). These two domains are linked by a central stalk (subunits gamma, delta, and epsilon) rotating inside the F1 region and a stationary peripheral stalk (subunits F6, b, d, and OSCP).

The protein resides in the mitochondrion. It localises to the mitochondrion inner membrane. In terms of biological role, subunit g, of the mitochondrial membrane ATP synthase complex (F(1)F(0) ATP synthase or Complex V) that produces ATP from ADP in the presence of a proton gradient across the membrane which is generated by electron transport complexes of the respiratory chain. ATP synthase complex consist of a soluble F(1) head domain - the catalytic core - and a membrane F(1) domain - the membrane proton channel. These two domains are linked by a central stalk rotating inside the F(1) region and a stationary peripheral stalk. During catalysis, ATP synthesis in the catalytic domain of F(1) is coupled via a rotary mechanism of the central stalk subunits to proton translocation. In vivo, can only synthesize ATP although its ATP hydrolase activity can be activated artificially in vitro. Part of the complex F(0) domain. This is ATP synthase F(0) complex subunit g, mitochondrial from Bos taurus (Bovine).